A 313-amino-acid chain; its full sequence is Ribosomal protein L11 methyltransferase (313 aa).

S-adenosyl-L-methionine contacts are provided by threonine 164, glycine 185, aspartate 207, and asparagine 249.

This sequence belongs to the methyltransferase superfamily. PrmA family.

The protein localises to the cytoplasm. The catalysed reaction is L-lysyl-[protein] + 3 S-adenosyl-L-methionine = N(6),N(6),N(6)-trimethyl-L-lysyl-[protein] + 3 S-adenosyl-L-homocysteine + 3 H(+). Its function is as follows. Methylates ribosomal protein L11. This Clostridium botulinum (strain Eklund 17B / Type B) protein is Ribosomal protein L11 methyltransferase.